The primary structure comprises 100 residues: NADH-quinone oxidoreductase subunit K (100 aa).

Helical transmembrane passes span 3-23 (PTAY…IGVL), 29-49 (IMIF…LVAF), and 63-83 (FIVM…IVAI).

This sequence belongs to the complex I subunit 4L family. In terms of assembly, NDH-1 is composed of 15 different subunits. Subunits NuoA, H, J, K, L, M, N constitute the membrane sector of the complex.

It localises to the cell membrane. It catalyses the reaction a quinone + NADH + 5 H(+)(in) = a quinol + NAD(+) + 4 H(+)(out). Functionally, NDH-1 shuttles electrons from NADH, via FMN and iron-sulfur (Fe-S) centers, to quinones in the respiratory chain. The immediate electron acceptor for the enzyme in this species is believed to be a menaquinone. Couples the redox reaction to proton translocation (for every two electrons transferred, four hydrogen ions are translocated across the cytoplasmic membrane), and thus conserves the redox energy in a proton gradient. The polypeptide is NADH-quinone oxidoreductase subunit K (Deinococcus geothermalis (strain DSM 11300 / CIP 105573 / AG-3a)).